The chain runs to 135 residues: Transcriptional activator protein (135 aa).

Residues 17–32 (KVQHKIAKKKPIRRKR) carry the Nuclear localization signal motif. A zinc finger lies at 37-54 (CGCSYYLHLNCNNHGFTH). Polar residues-rich tracts occupy residues 77–87 (LFQDNRTQPEA) and 101–115 (IQPQ…SQMF). A disordered region spans residues 77–117 (LFQDNRTQPEAISNEPRHHFHSDKIQPQHQEGNGDSQMFSR). Positions 120–135 (NLDDITASDWSFLKSI) are transactivation.

The protein belongs to the geminiviridae transcriptional activator protein family. As to quaternary structure, monomer. Homodimer. Homooligomer. Self-interaction correlates with nuclear localization and efficient activation of transcription. Monomers suppress local silencing by interacting with and inactivating host adenosine kinase 2 (ADK2) in the cytoplasm. Interacts with and inhibits host SNF1 kinase. Binds to ssDNA. May interact with host RPS27A. In terms of processing, phosphorylated.

It is found in the host nucleus. The protein resides in the host cytoplasm. Functionally, multifunctional protein that modulates host antiviral defenses and promotes host attractiveness to insect vectors. Acts as a suppressor of RNA-mediated gene silencing, also known as post-transcriptional gene silencing (PTGS), a mechanism of plant viral defense that limits the accumulation of viral RNAs. TrAP suppresses the host RNA silencing by inhibiting adenosine kinase 2 (ADK2), a kinase involved in a general methylation pathway. Also suppresses the host basal defense by interacting with and inhibiting SNF1 kinase, a key regulator of cell metabolism implicated in innate antiviral defense. In terms of biological role, inhibits signal transduction by the phytohormone jasmonate, making the infected plant more attractive to aphids, which are the second host to play a role as a dissemination vector. Acts by binding to ubiquitin precursor RPS27A, thereby preventing ubiquitin degradation of JAZ. The chain is Transcriptional activator protein from Tomato yellow leaf curl virus (strain Israel) (TYLCV).